The following is a 2273-amino-acid chain: Linear gramicidin synthase subunit A (2273 aa).

The GART stretch occupies residues 1 to 144; sequence MRILFLTTFM…AIEELFIREW (144 aa). Carrier domains are found at residues 693 to 767 and 1724 to 1798; these read APTD…TEQK and APRT…TSEQ. An O-(pantetheine 4'-phosphoryl)serine mark is found at Ser-728 and Ser-1759.

The protein belongs to the ATP-dependent AMP-binding enzyme family. As to quaternary structure, large multienzyme complex composed of 4 subunits; LgrA, LgrB, LgrC and LgrD. Requires pantetheine 4'-phosphate as cofactor.

Functionally, activates valine (or leucine, but much less frequently), and then glycine and catalyzes the formation of the peptide bond in the first step of peptide synthesis. This enzyme may also play a role in N-formylation of the first amino acid residue in the synthesized dipeptide. This is Linear gramicidin synthase subunit A (lgrA) from Brevibacillus parabrevis.